A 20-amino-acid polypeptide reads, in one-letter code: AYERQFYPGATSVAENNIGH.

The tract at residues 1–20 (AYERQFYPGATSVAENNIGH) is disordered.

The protein belongs to the methyl-coenzyme M reductase gamma subunit family. MCR from M.thermophila is a heterotrimer composed of an alpha, a beta, and a gamma subunit. The cofactor is coenzyme F430.

Its subcellular location is the cytoplasm. The catalysed reaction is coenzyme B + methyl-coenzyme M = methane + coenzyme M-coenzyme B heterodisulfide. Its pathway is one-carbon metabolism; methyl-coenzyme M reduction; methane from methyl-coenzyme M: step 1/1. Its function is as follows. Component of the methyl-coenzyme M reductase (MCR) I that catalyzes the reductive cleavage of methyl-coenzyme M (CoM-S-CH3 or 2-(methylthio)ethanesulfonate) using coenzyme B (CoB or 7-mercaptoheptanoylthreonine phosphate) as reductant which results in the production of methane and the mixed heterodisulfide of CoB and CoM (CoM-S-S-CoB). This is the final step in methanogenesis. This Methanosarcina thermophila protein is Methyl-coenzyme M reductase subunit gamma.